The chain runs to 136 residues: Large ribosomal subunit protein bL19 (136 aa).

The disordered stretch occupies residues 1 to 23; the sequence is MEETVNNQETPETSEEETADEET. A compositionally biased stretch (acidic residues) spans 12–23; the sequence is ETSEEETADEET.

Belongs to the bacterial ribosomal protein bL19 family.

In terms of biological role, this protein is located at the 30S-50S ribosomal subunit interface and may play a role in the structure and function of the aminoacyl-tRNA binding site. In Dehalococcoides mccartyi (strain ATCC BAA-2266 / KCTC 15142 / 195) (Dehalococcoides ethenogenes (strain 195)), this protein is Large ribosomal subunit protein bL19.